The chain runs to 370 residues: Queuine tRNA-ribosyltransferase (370 aa).

The active-site Proton acceptor is aspartate 89. Residues 89–93 (DSGGF), aspartate 143, glutamine 187, and glycine 214 contribute to the substrate site. The interval 245–251 (GVGTPED) is RNA binding. Aspartate 264 acts as the Nucleophile in catalysis. The interval 269–273 (TRNAR) is RNA binding; important for wobble base 34 recognition. Residues cysteine 302, cysteine 304, cysteine 307, and histidine 333 each contribute to the Zn(2+) site.

The protein belongs to the queuine tRNA-ribosyltransferase family. As to quaternary structure, homodimer. Within each dimer, one monomer is responsible for RNA recognition and catalysis, while the other monomer binds to the replacement base PreQ1. Zn(2+) is required as a cofactor.

It carries out the reaction 7-aminomethyl-7-carbaguanine + guanosine(34) in tRNA = 7-aminomethyl-7-carbaguanosine(34) in tRNA + guanine. Its pathway is tRNA modification; tRNA-queuosine biosynthesis. Functionally, catalyzes the base-exchange of a guanine (G) residue with the queuine precursor 7-aminomethyl-7-deazaguanine (PreQ1) at position 34 (anticodon wobble position) in tRNAs with GU(N) anticodons (tRNA-Asp, -Asn, -His and -Tyr). Catalysis occurs through a double-displacement mechanism. The nucleophile active site attacks the C1' of nucleotide 34 to detach the guanine base from the RNA, forming a covalent enzyme-RNA intermediate. The proton acceptor active site deprotonates the incoming PreQ1, allowing a nucleophilic attack on the C1' of the ribose to form the product. After dissociation, two additional enzymatic reactions on the tRNA convert PreQ1 to queuine (Q), resulting in the hypermodified nucleoside queuosine (7-(((4,5-cis-dihydroxy-2-cyclopenten-1-yl)amino)methyl)-7-deazaguanosine). This is Queuine tRNA-ribosyltransferase from Azoarcus sp. (strain BH72).